A 218-amino-acid chain; its full sequence is Glutathione S-transferase Mu 1 (218 aa).

One can recognise a GST N-terminal domain in the interval 2–88 (PMILGYWNVR…YLARKHHLDG (87 aa)). 7–8 (YW) lines the glutathione pocket. The residue at position 34 (Thr34) is a Phosphothreonine. Glutathione contacts are provided by residues 43–46 (RSQW), Lys50, and 59–60 (NL). Phosphoserine is present on Ser67. Residue 72-73 (QS) coordinates glutathione. The GST C-terminal domain maps to 90–208 (TEEERIRADI…KSSRYIATPI (119 aa)). Tyr116 is a substrate binding site. Ser210 is modified (phosphoserine).

Homodimer.

Its subcellular location is the cytoplasm. It catalyses the reaction RX + glutathione = an S-substituted glutathione + a halide anion + H(+). The catalysed reaction is prostaglandin A2 + glutathione = prostaglandin A2-S-(R)-glutathione. It carries out the reaction prostaglandin J2 + glutathione = prostaglandin J2-S-(R)-glutathione. The enzyme catalyses prostaglandin J2 + glutathione = prostaglandin J2-S-(S)-glutathione. It catalyses the reaction prostaglandin A2 + glutathione = prostaglandin A2-S-(S)-glutathione. The catalysed reaction is 11(S)-hydroxy-14(S),15(S)-epoxy-(5Z,8Z,12E)-eicosatrienoate + glutathione = (11S,15S)-dihydroxy-14(R)-S-glutathionyl-(5Z,8Z,12E)-eicosatrienoate. Conjugation of reduced glutathione to a wide number of exogenous and endogenous hydrophobic electrophiles. Involved in the formation of glutathione conjugates of both prostaglandin A2 (PGA2) and prostaglandin J2 (PGJ2). Participates in the formation of novel hepoxilin regioisomers. This is Glutathione S-transferase Mu 1 from Mus musculus (Mouse).